Consider the following 155-residue polypeptide: MRIGLGYDVHKLVENRPLIIGGVTIPHDKGLLGHSDADVLVHAIMDALLGAAALGDIGKHFPDSDKNFKNISSLLLLSKVKDLINKEGYKIVNIDCTIIAQKPKMLYHIDAMKKNICKCLKLDNNMLNIKATTEEGLGFTGKEEGISANAICLLN.

A divalent metal cation contacts are provided by Asp-8 and His-10. Residues 8-10 (DVH) and 34-35 (HS) each bind 4-CDP-2-C-methyl-D-erythritol 2-phosphate. Residue His-42 coordinates a divalent metal cation. Residues 56-58 (DIG), 61-65 (FPDSD), 100-106 (AQKPKML), 132-135 (TTEE), Phe-139, and Lys-142 each bind 4-CDP-2-C-methyl-D-erythritol 2-phosphate.

Belongs to the IspF family. In terms of assembly, homotrimer. The cofactor is a divalent metal cation.

The enzyme catalyses 4-CDP-2-C-methyl-D-erythritol 2-phosphate = 2-C-methyl-D-erythritol 2,4-cyclic diphosphate + CMP. It functions in the pathway isoprenoid biosynthesis; isopentenyl diphosphate biosynthesis via DXP pathway; isopentenyl diphosphate from 1-deoxy-D-xylulose 5-phosphate: step 4/6. Involved in the biosynthesis of isopentenyl diphosphate (IPP) and dimethylallyl diphosphate (DMAPP), two major building blocks of isoprenoid compounds. Catalyzes the conversion of 4-diphosphocytidyl-2-C-methyl-D-erythritol 2-phosphate (CDP-ME2P) to 2-C-methyl-D-erythritol 2,4-cyclodiphosphate (ME-CPP) with a corresponding release of cytidine 5-monophosphate (CMP). The chain is 2-C-methyl-D-erythritol 2,4-cyclodiphosphate synthase from Clostridium botulinum (strain 657 / Type Ba4).